Reading from the N-terminus, the 520-residue chain is MEEESSSWFIPKVLVLSVILSLVIVKGMSLLWWRPRKIEEHFSKQGIRGPPYHFFIGNVKELVGMMLKASSHPMPFSHNILPRVLSFYHHWRKIYGATFLVWFGPTFRLTVADPDLIREIFSKSEFYEKNEAHPLVKQLEGDGLLSLKGEKWAHHRKIISPTFHMENLKLLVPVVLKSVTDMVDKWSDKLSENGEVEVDVYEWFQILTEDVISRTAFGSSYEDGRAVFRLQAQQMLLCAEAFQKVFIPGYRFFPTRGNLKSWKLDKEIRKSLLKLIERRRQNAIDGEGEECKEPAAKDLLGLMIQAKNVTVQDIVEECKSFFFAGKQTTSNLLTWTTILLSMHPEWQAKARDEVLRVCGSRDVPTKDHVVKLKTLSMILNESLRLYPPIVATIRRAKSDVKLGGYKIPCGTELLIPIIAVHHDQAIWGNDVNEFNPARFADGVPRAAKHPVGFIPFGLGVRTCIGQNLAILQAKLTLAVMIQRFTFHLAPTYQHAPTVLMLLYPQHGAPITFRRLTNHED.

Residues 13–33 form a helical membrane-spanning segment; the sequence is VLVLSVILSLVIVKGMSLLWW. Residue C463 participates in heme binding.

It belongs to the cytochrome P450 family. Requires heme as cofactor.

The protein localises to the membrane. Its function is as follows. Cytochrome P450 involved in brassinosteroids (BRs) inactivation and regulation of BRs homeostasis. Inactivates the BRs castasterone (CS) and brassinolide (BL) through carbon 26 hydroxylation. Acts in association with CYP72C1 to inactivate BRs and modulate photomorphogenesis. The chain is Cytochrome P450 734A1 (CYP734A1) from Arabidopsis thaliana (Mouse-ear cress).